A 349-amino-acid chain; its full sequence is Divinyl chlorophyll a/b light-harvesting protein PcbB (349 aa).

The next 6 membrane-spanning stretches (helical) occupy residues 27 to 47, 57 to 77, 91 to 113, 201 to 221, 241 to 261, and 306 to 326; these read FIAAHAAHTGLIAFGCGAATL, LPMGHQSSLFLAHLASVGIGF, IAILHLILSMVYGGGGLLHSVYF, VMGGHAFLAFFQLGGGAFHIA, AILSWSLAGIGWMACVAAFWA, and LVNVHYYLGFFFIQGHLWHAL.

It belongs to the PsbB/PsbC family. IsiA/Pcb subfamily. The antenna complex consists of divinyl chlorophylls (a and b) and divinyl chlorophyll a/b binding proteins and binds more divinyl chlorophyll b than does the antenna complex from high-light-adapted Prochlorococcus. Requires divinyl chlorophyll a as cofactor. It depends on divinyl chlorophyll b as a cofactor.

The protein resides in the cellular thylakoid membrane. Functionally, the antenna complex functions as a light receptor, it captures and delivers excitation energy to photosystems II and I. The Prochlorales pcb genes are not related to higher plant LHCs. The protein is Divinyl chlorophyll a/b light-harvesting protein PcbB (pcbB) of Prochlorococcus marinus (strain SARG / CCMP1375 / SS120).